The chain runs to 321 residues: Outer envelope protein 36, chloroplastic (321 aa).

The protein belongs to the OEP80 (TC 1.B.33.2) family. As to expression, expressed in germinating seeds.

Its subcellular location is the plastid. It localises to the chloroplast outer membrane. In terms of biological role, may play a role during plastid development. This chain is Outer envelope protein 36, chloroplastic, found in Arabidopsis thaliana (Mouse-ear cress).